The following is a 353-amino-acid chain: Anthranilate phosphoribosyltransferase (353 aa).

5-phospho-alpha-D-ribose 1-diphosphate-binding positions include glycine 79, 82-83, threonine 87, 89-92, 107-115, and serine 119; these read GD, NIST, and KHGNHSFTS. Anthranilate is bound at residue glycine 79. A Mg(2+)-binding site is contributed by serine 91. Residue asparagine 110 coordinates anthranilate. Arginine 165 contacts anthranilate. The Mg(2+) site is built by aspartate 223 and glutamate 224.

The protein belongs to the anthranilate phosphoribosyltransferase family. Homodimer. Requires Mg(2+) as cofactor.

It catalyses the reaction N-(5-phospho-beta-D-ribosyl)anthranilate + diphosphate = 5-phospho-alpha-D-ribose 1-diphosphate + anthranilate. It functions in the pathway amino-acid biosynthesis; L-tryptophan biosynthesis; L-tryptophan from chorismate: step 2/5. Catalyzes the transfer of the phosphoribosyl group of 5-phosphorylribose-1-pyrophosphate (PRPP) to anthranilate to yield N-(5'-phosphoribosyl)-anthranilate (PRA). The polypeptide is Anthranilate phosphoribosyltransferase (Methanococcoides burtonii (strain DSM 6242 / NBRC 107633 / OCM 468 / ACE-M)).